A 140-amino-acid polypeptide reads, in one-letter code: Cystatin-C (140 aa).

An N-terminal signal peptide occupies residues 1–20 (MASPLRSLLFLLAVLAVAWA). Positions 75 to 79 (QLVAG) match the Secondary area of contact motif. 2 cysteine pairs are disulfide-bonded: Cys-93-Cys-103 and Cys-117-Cys-137.

This sequence belongs to the cystatin family.

It is found in the secreted. As an inhibitor of cysteine proteinases, this protein is thought to serve an important physiological role as a local regulator of this enzyme activity. The sequence is that of Cystatin-C (Cst3) from Mus musculus (Mouse).